The primary structure comprises 217 residues: Phosphatidylserine decarboxylase proenzyme (217 aa).

Residue S182 is the Schiff-base intermediate with substrate; via pyruvic acid of the active site. Position 182 is a pyruvic acid (Ser); by autocatalysis (S182).

This sequence belongs to the phosphatidylserine decarboxylase family. PSD-A subfamily. Heterodimer of a large membrane-associated beta subunit and a small pyruvoyl-containing alpha subunit. The cofactor is pyruvate. Post-translationally, is synthesized initially as an inactive proenzyme. Formation of the active enzyme involves a self-maturation process in which the active site pyruvoyl group is generated from an internal serine residue via an autocatalytic post-translational modification. Two non-identical subunits are generated from the proenzyme in this reaction, and the pyruvate is formed at the N-terminus of the alpha chain, which is derived from the carboxyl end of the proenzyme. The post-translation cleavage follows an unusual pathway, termed non-hydrolytic serinolysis, in which the side chain hydroxyl group of the serine supplies its oxygen atom to form the C-terminus of the beta chain, while the remainder of the serine residue undergoes an oxidative deamination to produce ammonia and the pyruvoyl prosthetic group on the alpha chain.

The protein localises to the cell membrane. The catalysed reaction is a 1,2-diacyl-sn-glycero-3-phospho-L-serine + H(+) = a 1,2-diacyl-sn-glycero-3-phosphoethanolamine + CO2. It functions in the pathway phospholipid metabolism; phosphatidylethanolamine biosynthesis; phosphatidylethanolamine from CDP-diacylglycerol: step 2/2. Its function is as follows. Catalyzes the formation of phosphatidylethanolamine (PtdEtn) from phosphatidylserine (PtdSer). The polypeptide is Phosphatidylserine decarboxylase proenzyme (Nitratidesulfovibrio vulgaris (strain ATCC 29579 / DSM 644 / CCUG 34227 / NCIMB 8303 / VKM B-1760 / Hildenborough) (Desulfovibrio vulgaris)).